The following is a 167-amino-acid chain: Transcription antitermination protein NusB (167 aa).

The segment at 1–32 (MSDTPETGKPAAGTKPAARTEAKAPPKSARRR) is disordered.

The protein belongs to the NusB family.

Involved in transcription antitermination. Required for transcription of ribosomal RNA (rRNA) genes. Binds specifically to the boxA antiterminator sequence of the ribosomal RNA (rrn) operons. This chain is Transcription antitermination protein NusB, found in Cupriavidus pinatubonensis (strain JMP 134 / LMG 1197) (Cupriavidus necator (strain JMP 134)).